Consider the following 806-residue polypeptide: Leucine--tRNA ligase (806 aa).

The short motif at 40–51 is the 'HIGH' region element; that stretch reads PYPSGKGLHVGH. The 'KMSKS' region signature appears at 580 to 584; that stretch reads KMSKS. An ATP-binding site is contributed by Lys-583.

It belongs to the class-I aminoacyl-tRNA synthetase family.

It is found in the cytoplasm. The catalysed reaction is tRNA(Leu) + L-leucine + ATP = L-leucyl-tRNA(Leu) + AMP + diphosphate. The chain is Leucine--tRNA ligase from Ureaplasma urealyticum serovar 10 (strain ATCC 33699 / Western).